The following is a 416-amino-acid chain: Serine hydroxymethyltransferase (416 aa).

(6S)-5,6,7,8-tetrahydrofolate contacts are provided by residues leucine 121 and 125–127 (GHL). Lysine 230 is modified (N6-(pyridoxal phosphate)lysine). 355-357 (SPF) provides a ligand contact to (6S)-5,6,7,8-tetrahydrofolate.

This sequence belongs to the SHMT family. Homodimer. Pyridoxal 5'-phosphate serves as cofactor.

It localises to the cytoplasm. It catalyses the reaction (6R)-5,10-methylene-5,6,7,8-tetrahydrofolate + glycine + H2O = (6S)-5,6,7,8-tetrahydrofolate + L-serine. It participates in one-carbon metabolism; tetrahydrofolate interconversion. It functions in the pathway amino-acid biosynthesis; glycine biosynthesis; glycine from L-serine: step 1/1. Its function is as follows. Catalyzes the reversible interconversion of serine and glycine with tetrahydrofolate (THF) serving as the one-carbon carrier. This reaction serves as the major source of one-carbon groups required for the biosynthesis of purines, thymidylate, methionine, and other important biomolecules. Also exhibits THF-independent aldolase activity toward beta-hydroxyamino acids, producing glycine and aldehydes, via a retro-aldol mechanism. This Streptococcus thermophilus (strain CNRZ 1066) protein is Serine hydroxymethyltransferase.